We begin with the raw amino-acid sequence, 430 residues long: Gamma-glutamyl phosphate reductase (430 aa).

The protein belongs to the gamma-glutamyl phosphate reductase family.

It is found in the cytoplasm. It catalyses the reaction L-glutamate 5-semialdehyde + phosphate + NADP(+) = L-glutamyl 5-phosphate + NADPH + H(+). Its pathway is amino-acid biosynthesis; L-proline biosynthesis; L-glutamate 5-semialdehyde from L-glutamate: step 2/2. Its function is as follows. Catalyzes the NADPH-dependent reduction of L-glutamate 5-phosphate into L-glutamate 5-semialdehyde and phosphate. The product spontaneously undergoes cyclization to form 1-pyrroline-5-carboxylate. This Rhodopseudomonas palustris (strain BisA53) protein is Gamma-glutamyl phosphate reductase.